Here is a 229-residue protein sequence, read N- to C-terminus: 2-C-methyl-D-erythritol 4-phosphate cytidylyltransferase (229 aa).

The protein belongs to the IspD/TarI cytidylyltransferase family. IspD subfamily.

The enzyme catalyses 2-C-methyl-D-erythritol 4-phosphate + CTP + H(+) = 4-CDP-2-C-methyl-D-erythritol + diphosphate. It participates in isoprenoid biosynthesis; isopentenyl diphosphate biosynthesis via DXP pathway; isopentenyl diphosphate from 1-deoxy-D-xylulose 5-phosphate: step 2/6. Functionally, catalyzes the formation of 4-diphosphocytidyl-2-C-methyl-D-erythritol from CTP and 2-C-methyl-D-erythritol 4-phosphate (MEP). This chain is 2-C-methyl-D-erythritol 4-phosphate cytidylyltransferase, found in Clostridium botulinum (strain Langeland / NCTC 10281 / Type F).